The chain runs to 95 residues: Small ribosomal subunit protein bS18 (95 aa).

The protein belongs to the bacterial ribosomal protein bS18 family. In terms of assembly, part of the 30S ribosomal subunit. Forms a tight heterodimer with protein bS6.

In terms of biological role, binds as a heterodimer with protein bS6 to the central domain of the 16S rRNA, where it helps stabilize the platform of the 30S subunit. The polypeptide is Small ribosomal subunit protein bS18 (Ehrlichia ruminantium (strain Gardel)).